The primary structure comprises 166 residues: SsrA-binding protein (166 aa).

Residues 143–166 (HDKREDDKRKQANRDMKSALARYR) are disordered. A compositionally biased stretch (basic and acidic residues) spans 144-159 (DKREDDKRKQANRDMK).

This sequence belongs to the SmpB family.

The protein localises to the cytoplasm. Its function is as follows. Required for rescue of stalled ribosomes mediated by trans-translation. Binds to transfer-messenger RNA (tmRNA), required for stable association of tmRNA with ribosomes. tmRNA and SmpB together mimic tRNA shape, replacing the anticodon stem-loop with SmpB. tmRNA is encoded by the ssrA gene; the 2 termini fold to resemble tRNA(Ala) and it encodes a 'tag peptide', a short internal open reading frame. During trans-translation Ala-aminoacylated tmRNA acts like a tRNA, entering the A-site of stalled ribosomes, displacing the stalled mRNA. The ribosome then switches to translate the ORF on the tmRNA; the nascent peptide is terminated with the 'tag peptide' encoded by the tmRNA and targeted for degradation. The ribosome is freed to recommence translation, which seems to be the essential function of trans-translation. In Prochlorococcus marinus (strain MIT 9211), this protein is SsrA-binding protein.